A 177-amino-acid polypeptide reads, in one-letter code: Large ribosomal subunit protein uL6 (177 aa).

Residues 157 to 177 (YKGKGVRYAGEKVRRKEGKKK) form a disordered region.

Belongs to the universal ribosomal protein uL6 family. As to quaternary structure, part of the 50S ribosomal subunit.

Functionally, this protein binds to the 23S rRNA, and is important in its secondary structure. It is located near the subunit interface in the base of the L7/L12 stalk, and near the tRNA binding site of the peptidyltransferase center. The polypeptide is Large ribosomal subunit protein uL6 (Caulobacter vibrioides (strain ATCC 19089 / CIP 103742 / CB 15) (Caulobacter crescentus)).